The primary structure comprises 139 residues: S-adenosyl-L-methionine-binding protein AF_0241 (139 aa).

Positions 3–133 (LKPIGVVKSP…YSPEIDCVNQ (131 aa)) constitute a TsaA-like domain. Residues glutamine 16, 20-22 (PRQ), 58-59 (DK), arginine 82, leucine 92, and 113-116 (LDGS) each bind S-adenosyl-L-methionine.

This sequence belongs to the tRNA methyltransferase O family. As to quaternary structure, homodimer.

The sequence is that of S-adenosyl-L-methionine-binding protein AF_0241 from Archaeoglobus fulgidus (strain ATCC 49558 / DSM 4304 / JCM 9628 / NBRC 100126 / VC-16).